The chain runs to 446 residues: Thymidine phosphorylase (446 aa).

It belongs to the thymidine/pyrimidine-nucleoside phosphorylase family. In terms of assembly, homodimer.

It catalyses the reaction thymidine + phosphate = 2-deoxy-alpha-D-ribose 1-phosphate + thymine. The protein operates within pyrimidine metabolism; dTMP biosynthesis via salvage pathway; dTMP from thymine: step 1/2. The enzymes which catalyze the reversible phosphorolysis of pyrimidine nucleosides are involved in the degradation of these compounds and in their utilization as carbon and energy sources, or in the rescue of pyrimidine bases for nucleotide synthesis. The chain is Thymidine phosphorylase from Psychromonas ingrahamii (strain DSM 17664 / CCUG 51855 / 37).